The chain runs to 183 residues: Large ribosomal subunit protein bL27m (183 aa).

A mitochondrion-targeting transit peptide spans 1–34; that stretch reads MFLRPTSIPSAVSQIRAQLFAGPSSLASQIQVRW.

Belongs to the bacterial ribosomal protein bL27 family.

The protein localises to the mitochondrion. The polypeptide is Large ribosomal subunit protein bL27m (RPL27) (Cryptococcus neoformans var. neoformans serotype D (strain B-3501A) (Filobasidiella neoformans)).